The primary structure comprises 423 residues: MEGGRCAQVSSVPASPSSGHRHRAALILARGGSKGIPLKNIKNLAGVPLIGWVLRAALDSDVDSVWVSTDHDEIERVAKLWGAKVHRRSPEVSKDSSSSLETIQEFIRLRPEVDVICHIQATSPCLHPHHINEALQKITHQGFSYVLSVVRRHQFRWEELQENEDRNPKSFNINVAQRPRRQDWPGELYENGSFYFSTRKAWESGLTELGRIAYYEMPPEFSVDIDVDIDWPVAEQRVLRFGYFGREENAAVRLFLCKVSGCLTNGQIYMSVSGEDLVTINARDVAGIQMLQKENIEVILISSVNEPLSRGVLEKVSQRAGCGLSFTEQRNALEMQKLMDKRKLHWDQVAFMGSESEDVEIMSQAGLNGVPSDAPVAELIAAKYTCQRAGGHGAVREFAEYILSMKRKSSREENHERIDKHNF.

Substrate contacts are provided by Arg30, Asn40, Arg88, Ser97, Ser99, and Gln120. The active site involves Arg178.

The protein belongs to the CMP-NeuNAc synthase family. Homotetramer.

The protein localises to the cytoplasm. The catalysed reaction is an N-acylneuraminate + CTP = a CMP-N-acyl-beta-neuraminate + diphosphate. Its pathway is amino-sugar metabolism; N-acetylneuraminate metabolism. Catalyzes the activation of 2-keto-3-deoxy-D-glycero-D-galacto-nononic acid (KDN) to cytidine 5'-monophosphate 2-keto-3-deoxy-D-glycero-D-galacto-nononic acid (CMP-KDN), a substrate required for the addition of sialic acid. Also has weak activity towards N-acetylneuraminic acid (NeuNAc) and N-glycolylneuraminic acid (Neu5Gc). This chain is N-acylneuraminate cytidylyltransferase B, found in Danio rerio (Zebrafish).